The chain runs to 121 residues: Large ribosomal subunit protein uL18 (121 aa).

Residues 1-19 (MASKKVQKIRDKRKARVRA) show a composition bias toward basic residues. The tract at residues 1 to 23 (MASKKVQKIRDKRKARVRAKISG) is disordered.

The protein belongs to the universal ribosomal protein uL18 family. As to quaternary structure, part of the 50S ribosomal subunit; part of the 5S rRNA/L5/L18/L25 subcomplex. Contacts the 5S and 23S rRNAs.

Functionally, this is one of the proteins that bind and probably mediate the attachment of the 5S RNA into the large ribosomal subunit, where it forms part of the central protuberance. The protein is Large ribosomal subunit protein uL18 of Syntrophus aciditrophicus (strain SB).